A 160-amino-acid polypeptide reads, in one-letter code: 3-hydroxyacyl-[acyl-carrier-protein] dehydratase FabZ (160 aa).

Residue H63 is part of the active site.

This sequence belongs to the thioester dehydratase family. FabZ subfamily.

The protein resides in the cytoplasm. The enzyme catalyses a (3R)-hydroxyacyl-[ACP] = a (2E)-enoyl-[ACP] + H2O. Its function is as follows. Involved in unsaturated fatty acids biosynthesis. Catalyzes the dehydration of short chain beta-hydroxyacyl-ACPs and long chain saturated and unsaturated beta-hydroxyacyl-ACPs. This Xylella fastidiosa (strain 9a5c) protein is 3-hydroxyacyl-[acyl-carrier-protein] dehydratase FabZ.